The sequence spans 471 residues: Tryptophanase (471 aa).

N6-acetyllysine occurs at positions 5, 115, and 156. Lysine 270 is subject to N6-(pyridoxal phosphate)lysine. An N6-acetyllysine modification is found at lysine 450.

Belongs to the beta-eliminating lyase family. Homotetramer. Pyridoxal 5'-phosphate is required as a cofactor.

The enzyme catalyses L-tryptophan + H2O = indole + pyruvate + NH4(+). Its pathway is amino-acid degradation; L-tryptophan degradation via pyruvate pathway; indole and pyruvate from L-tryptophan: step 1/1. This Escherichia coli (strain SMS-3-5 / SECEC) protein is Tryptophanase.